The sequence spans 319 residues: Coiled-coil domain-containing protein PF3D7_1144200 (319 aa).

Residues 1 to 12 are compositionally biased toward basic and acidic residues; it reads MSEEHSNDHIED. Disordered stretches follow at residues 1–43 and 112–158; these read MSEE…SESS and KLEK…NQHN. Positions 16 to 26 are enriched in polar residues; the sequence is CSQNCDETNSP. Composition is skewed to basic and acidic residues over residues 27-36 and 112-131; these read KNEKDEKDFK and KLEK…KKVT. 3 coiled-coil regions span residues 100 to 134, 166 to 242, and 281 to 310; these read DLAN…TNDS, ELNE…IKKN, and NSNC…LINI. The span at 132-150 shows a compositional bias: low complexity; sequence NDSTNNKNKNNSVPFLNEN.

In Plasmodium falciparum (isolate 3D7), this protein is Coiled-coil domain-containing protein PF3D7_1144200.